Consider the following 328-residue polypeptide: MTQGSALPVLGAGGWGTALAVAAARAGQPARLWARRPDFAARLAEVRENREYLPGVLLPPEVAVTSDLPGAVAGADFALLVVPSVGVPELLAGLPRELGVVLCAKGLAPDGSRLSEYAAGLGFDRVAVLSGPNHAEEIGRGLPAATVVASRDPALAAAVQTALMSPSLRVYTSRDVPGVELGGVLKNVIAVAAGMGDGLHLGDNAKATLLTRGLREMNRYLRSLGAEEETVYGLSGLGDLIATATSPHSRNRAAGEAIARGESPQQGGKVVEGLRTAGLLDAWAAAHGHDLPIVRAVAQVTRGEWSPAEGVRHLMGREAKGETEAGEP.

The NADPH site is built by Trp-15, Arg-35, Arg-36, and Lys-105. Positions 105 and 131 each coordinate sn-glycerol 3-phosphate. Ala-135 contacts NADPH. 5 residues coordinate sn-glycerol 3-phosphate: Lys-186, Asp-239, Ser-249, Arg-250, and Asn-251. Catalysis depends on Lys-186, which acts as the Proton acceptor. Arg-250 lines the NADPH pocket. NADPH is bound by residues Val-270 and Glu-272.

It belongs to the NAD-dependent glycerol-3-phosphate dehydrogenase family.

It localises to the cytoplasm. The catalysed reaction is sn-glycerol 3-phosphate + NAD(+) = dihydroxyacetone phosphate + NADH + H(+). It carries out the reaction sn-glycerol 3-phosphate + NADP(+) = dihydroxyacetone phosphate + NADPH + H(+). Its pathway is membrane lipid metabolism; glycerophospholipid metabolism. Catalyzes the reduction of the glycolytic intermediate dihydroxyacetone phosphate (DHAP) to sn-glycerol 3-phosphate (G3P), the key precursor for phospholipid synthesis. The polypeptide is Glycerol-3-phosphate dehydrogenase [NAD(P)+] (Deinococcus radiodurans (strain ATCC 13939 / DSM 20539 / JCM 16871 / CCUG 27074 / LMG 4051 / NBRC 15346 / NCIMB 9279 / VKM B-1422 / R1)).